The primary structure comprises 510 residues: NAD(P)H-quinone oxidoreductase subunit 2 B, chloroplastic (510 aa).

13 helical membrane passes run 24–44 (LLLF…GLIL), 57–77 (LPWF…ALLF), 99–119 (IFQF…VEYI), 124–144 (MAIT…MFLC), 149–169 (LITI…LSGY), 183–203 (YLLM…WLYG), 227–247 (PGIS…LSPA), 295–315 (WHLL…IIAI), 323–343 (MLAY…IVGD), 354–374 (YMLF…LFGL), 395–415 (ALSL…AGFF), 428–448 (GLYS…YYYL), and 484–504 (MIVC…IIAI).

Belongs to the complex I subunit 2 family. NDH is composed of at least 16 different subunits, 5 of which are encoded in the nucleus.

The protein localises to the plastid. It localises to the chloroplast thylakoid membrane. It catalyses the reaction a plastoquinone + NADH + (n+1) H(+)(in) = a plastoquinol + NAD(+) + n H(+)(out). The enzyme catalyses a plastoquinone + NADPH + (n+1) H(+)(in) = a plastoquinol + NADP(+) + n H(+)(out). NDH shuttles electrons from NAD(P)H:plastoquinone, via FMN and iron-sulfur (Fe-S) centers, to quinones in the photosynthetic chain and possibly in a chloroplast respiratory chain. The immediate electron acceptor for the enzyme in this species is believed to be plastoquinone. Couples the redox reaction to proton translocation, and thus conserves the redox energy in a proton gradient. This is NAD(P)H-quinone oxidoreductase subunit 2 B, chloroplastic from Jasminum nudiflorum (Winter jasmine).